A 419-amino-acid polypeptide reads, in one-letter code: Bilin biosynthesis protein CpeY (419 aa).

Involved in the biosynthesis of bilin. The protein is Bilin biosynthesis protein CpeY (cpeY) of Synechococcus sp. (strain WH8020).